We begin with the raw amino-acid sequence, 138 residues long: Protein Turandot B (138 aa).

The first 21 residues, 1 to 21 (MNFKTSLICFALLLIGTLCSA), serve as a signal peptide directing secretion.

The protein belongs to the Turandot family.

It is found in the secreted. Its function is as follows. A humoral factor that may play a role in stress tolerance. The protein is Protein Turandot B of Drosophila melanogaster (Fruit fly).